Consider the following 610-residue polypeptide: Zinc metalloproteinase-disintegrin-like 3a (610 aa).

The first 19 residues, 1 to 19 (MIQVLLVTILAVFPYQGSS), serve as a signal peptide directing secretion. Positions 20–188 (IILGSGNVND…KKASQLVVTA (169 aa)) are excised as a propeptide. The 197-residue stretch at 198 to 394 (RYVELVIVAD…YTPKCILNEP (197 aa)) folds into the Peptidase M12B domain. Residue E201 participates in Ca(2+) binding. N217 is a glycosylation site (N-linked (GlcNAc...) asparagine). D285 provides a ligand contact to Ca(2+). 3 cysteine pairs are disulfide-bonded: C309–C389, C349–C373, and C351–C356. Residue H334 participates in Zn(2+) binding. The active site involves E335. Zn(2+) is bound by residues H338 and H344. Residues C389, N392, V404, N407, E411, E414, and D417 each coordinate Ca(2+). Residues 402–488 (PPVCGNELLE…DCPTDDFHKN (87 aa)) enclose the Disintegrin domain. 14 cysteine pairs are disulfide-bonded: C405-C434, C416-C429, C418-C424, C428-C451, C442-C448, C447-C473, C460-C480, C467-C499, C492-C504, C511-C561, C526-C572, C539-C549, C556-C598, and C592-C603. The short motif at 466-468 (ECD) is the D/ECD-tripeptide element.

The protein belongs to the venom metalloproteinase (M12B) family. P-III subfamily. Zn(2+) serves as cofactor. Expressed by the venom gland.

It is found in the secreted. Snake venom metalloproteinase that impairs hemostasis in the envenomed animal. In Crotalus adamanteus (Eastern diamondback rattlesnake), this protein is Zinc metalloproteinase-disintegrin-like 3a.